Consider the following 675-residue polypeptide: MAAQKNNAPKEYGADSITILEGLEAVRKRPGMYIGSTGERGLHHLIWEVVDNAVDEAMAGFATRVDVKIHADGSVEVRDDGRGIPVEMHATGMPTIDVVMTQLHAGGKFDGETYAVSGGLHGVGVSVVNALSTRLEATVLRDGYEWFQYYDRSVPGKLKQGGETKETGTTIRFWADPEIFETTDYNFETVARRLQEMAFLNKGLTIELTDERVTAEEVVDDVVKDTAEAPKTADEKAAEATGPSKVKHRVFHYPGGLVDYVKHINRTKTPIQQSIIDFDGKGPGHEVEIAMQWNAGYSESVHTFANTINTHEGGTHEEGFRAALTSVVNRYAKDKKLLKDKDPNLTGDDIREGLAAVISVKVAEPQFEGQTKTKLGNTEVKSFVQKICNEQLQHWFEANPAEAKTVVNKAVSSAQARIAARKARELVRRKSATDIGGLPGKLADCRSTDPSKSELYVVEGDSAGGSAKSGRDSMFQAILPLRGKIINVEKARIDRVLKNTEVQSIITALGTGIHDEFDISKLRYHKIVLMADADVDGQHISTLLLTLLFRFMKPLVENGHIFLAQPPLYKLKWQRSEPEFAYSDRERDGLLEAGRAAGKKINVDDGIQRYKGLGEMDAKELWETTMDPSVRVLRQVTLDDAAAADELFSILMGEDVEARRSFITRNAKDVRFLDV.

The 115-residue stretch at 453 to 567 (SELYVVEGDS…NGHIFLAQPP (115 aa)) folds into the Toprim domain. Mg(2+) is bound by residues Glu459, Asp532, and Asp534.

This sequence belongs to the type II topoisomerase GyrB family. In terms of assembly, heterotetramer, composed of two GyrA and two GyrB chains. In the heterotetramer, GyrA contains the active site tyrosine that forms a transient covalent intermediate with DNA, while GyrB binds cofactors and catalyzes ATP hydrolysis. The cofactor is Mg(2+). Mn(2+) is required as a cofactor. It depends on Ca(2+) as a cofactor.

The protein localises to the cytoplasm. The catalysed reaction is ATP-dependent breakage, passage and rejoining of double-stranded DNA.. With respect to regulation, inhibited by 4-quinoline drugs (nalidixic acid, ciprofloxacin, ofloxacin), although it is much less sensitive than the corresponding enzyme from E.coli. GyrB intrinsic ATPase activity inhibited by aminopyrazinamide and pyrrolamide derivatives. In terms of biological role, a type II topoisomerase that negatively supercoils closed circular double-stranded (ds) DNA in an ATP-dependent manner to modulate DNA topology and maintain chromosomes in an underwound state. Negative supercoiling favors strand separation, and DNA replication, transcription, recombination and repair, all of which involve strand separation. Also able to catalyze the interconversion of other topological isomers of dsDNA rings, including catenanes and knotted rings. Type II topoisomerases break and join 2 DNA strands simultaneously in an ATP-dependent manner. The sequence is that of DNA gyrase subunit B from Mycolicibacterium smegmatis (strain ATCC 700084 / mc(2)155) (Mycobacterium smegmatis).